We begin with the raw amino-acid sequence, 267 residues long: Chorismate mutase (267 aa).

The 256-residue stretch at 7 to 262 (LSDASKALDL…EVEYLMQRLK (256 aa)) folds into the Chorismate mutase domain. Positions 77, 78, 145, 147, 148, and 151 each coordinate L-tyrosine. The L-tryptophan site is built by Asn145, Gly147, and Ser148.

As to quaternary structure, homodimer.

The protein localises to the cytoplasm. The catalysed reaction is chorismate = prephenate. Its pathway is metabolic intermediate biosynthesis; prephenate biosynthesis; prephenate from chorismate: step 1/1. Its activity is regulated as follows. Each dimer has two allosteric binding sites that can bind the regulatory effectors tryptophan or tyrosine. Can bind either one tryptophan or one tyrosine, two tryptophan or two tyrosine or one tryptophan and one tyrosine, which differentially affect the catalytic activity. Activated by tryptophan and subject to feedback inhibition by tyrosine. In the presence of both tryptophan and tyrosine, the enzyme is in the activated state. Catalyzes the Claisen rearrangement of chorismate to prephenate. Acts at the first branch point in the aromatic amino acid pathway where it steers biosynthesis towards phenylalanine and tyrosine, and away from tryptophan. The chain is Chorismate mutase from Emericella nidulans (strain FGSC A4 / ATCC 38163 / CBS 112.46 / NRRL 194 / M139) (Aspergillus nidulans).